Here is a 342-residue protein sequence, read N- to C-terminus: Transcription initiation factor TFIID subunit 12 (342 aa).

A disordered region spans residues 1-221 (MKMEEFSPPT…QAPPPQMIPA (221 aa)). A compositionally biased stretch (polar residues) spans 12-35 (PNNHVIVQANPQIAAALSTNSPMQ). 4 stretches are compositionally biased toward low complexity: residues 39 to 59 (PPQGHQNPNEQQQQQQFVGQP), 67 to 89 (PMRMQMPQQQIRQMPYPSPQMRA), 96 to 146 (QQQQ…HLMG), and 180 to 192 (QQIMQVQHQQQHQ). The span at 193 to 218 (QPPPSQQIQQPPIPQPQQQQAPPPQM) shows a compositional bias: pro residues. The 68-residue stretch at 230 to 297 (EKSKLDDLMQ…EFILKNVYNM (68 aa)) folds into the Histone-fold domain.

The protein belongs to the TAF12 family. Interacts (via histone-fold domain) with taf-4 (via the histone-fold domain). Interaction may facilitate the nuclear localization of taf-4.

Its subcellular location is the nucleus. Functionally, part of the general transcription factor complex TFIID. Plays a role in recruiting taf-4 to the nucleus and thereby activating transcription initiation by RNA polymerase II, as part of the TFIID complex. This chain is Transcription initiation factor TFIID subunit 12, found in Caenorhabditis elegans.